The primary structure comprises 638 residues: Zinc finger protein 143 (638 aa).

The residue at position 1 (methionine 1) is an N-acetylmethionine. Lysine 213 participates in a covalent cross-link: Glycyl lysine isopeptide (Lys-Gly) (interchain with G-Cter in SUMO2). C2H2-type zinc fingers lie at residues 237–261 (FRCK…ERSH), 267–291 (YQCE…FRTH), 297–321 (YRCS…IRTH), and 327–351 (FKCP…IRTH). Threonine 352 carries the phosphothreonine modification. C2H2-type zinc fingers lie at residues 357 to 381 (YYCT…VRIH), 387 to 411 (YVCT…HVVH), and 417 to 440 (YNCN…RTAH). A Glycyl lysine isopeptide (Lys-Gly) (interchain with G-Cter in SUMO2) cross-link involves residue lysine 406.

Belongs to the GLI C2H2-type zinc-finger protein family. As to quaternary structure, interacts with CHD8. Forms a complex with HCFC1 and ZNF143.

The protein resides in the nucleus. In terms of biological role, transcriptional activator. In complex with HCFC1 and ZNF143, regulates the expression of several genes, including AP2S1, ESCO2, OPHN1, RBL1, UBXN8 and ZNF32. Activates the gene for selenocysteine tRNA (tRNAsec). Binds to the SPH motif of small nuclear RNA (snRNA) gene promoters. Participates in efficient U6 RNA polymerase III transcription via its interaction with CHD8. The chain is Zinc finger protein 143 (Znf143) from Rattus norvegicus (Rat).